The chain runs to 292 residues: Tetrahydromethanopterin:alpha-L-glutamate ligase (292 aa).

The 184-residue stretch at S103 to L286 folds into the ATP-grasp domain. ATP contacts are provided by residues K138, Q176 to D188, and R204. The Mg(2+) site is built by D247, E259, and N261. The Mn(2+) site is built by D247, E259, and N261.

The protein belongs to the RimK family. MptN subfamily. Homodimer. It depends on Mg(2+) as a cofactor. Mn(2+) is required as a cofactor.

The enzyme catalyses 5,6,7,8-tetrahydromethanopterin + L-glutamate + ATP = 5,6,7,8-tetrahydrosarcinapterin + ADP + phosphate + H(+). It participates in cofactor biosynthesis; 5,6,7,8-tetrahydrosarcinapterin biosynthesis. Its function is as follows. Catalyzes the ATP or GTP-dependent addition of one L-glutamate molecule to tetrahydromethanopterin, producing tetrahydrosarcinapterin. This Methanococcus maripaludis (strain DSM 14266 / JCM 13030 / NBRC 101832 / S2 / LL) protein is Tetrahydromethanopterin:alpha-L-glutamate ligase (mptN).